The following is a 498-amino-acid chain: Oligopeptide transport system permease protein AmiC (498 aa).

6 helical membrane-spanning segments follow: residues 12-32 (SLVS…TLVP), 279-299 (MIVS…ALAV), 316-336 (LSTG…VYIV), 359-379 (SYVL…AIWI), 415-435 (MVPL…GATL), and 461-481 (VVGL…LGDI). Residues 280-479 (IVSSAITGLI…CISIFSRLLG (200 aa)) enclose the ABC transmembrane type-1 domain.

Belongs to the binding-protein-dependent transport system permease family. OppBC subfamily.

The protein localises to the cell membrane. Its function is as follows. Part of the binding-protein-dependent transport system for oligopeptides; probably responsible for the translocation of the substrate across the membrane. The protein is Oligopeptide transport system permease protein AmiC (amiC) of Streptococcus pneumoniae serotype 4 (strain ATCC BAA-334 / TIGR4).